The sequence spans 212 residues: Ribonuclease HII (212 aa).

The region spanning 22 to 211 is the RNase H type-2 domain; that stretch reads GLVAGVDEVG…VADRILLQNT (190 aa). A divalent metal cation is bound by residues Asp28, Glu29, and Asp120.

This sequence belongs to the RNase HII family. The cofactor is Mn(2+). Mg(2+) serves as cofactor.

It localises to the cytoplasm. It catalyses the reaction Endonucleolytic cleavage to 5'-phosphomonoester.. Functionally, endonuclease that specifically degrades the RNA of RNA-DNA hybrids. In Shewanella frigidimarina (strain NCIMB 400), this protein is Ribonuclease HII.